The primary structure comprises 608 residues: FAD-binding monooxygenase ktnD (608 aa).

Asn4 carries N-linked (GlcNAc...) asparagine glycosylation. Residues 17 to 37 form a helical membrane-spanning segment; it reads ATVVIIGAGVSGMCMAIDLLH. Residues 56–59, 68–69, and Tyr74 contribute to the FAD site; these read TWAN and DV. An NADP(+)-binding site is contributed by 66 to 68; that stretch reads ASD. N-linked (GlcNAc...) asparagine glycosylation is present at Asn114. Residues 201 to 207 and 224 to 225 contribute to the NADP(+) site; these read NGASAIQ and RS. The N-linked (GlcNAc...) asparagine glycan is linked to Asn325. A helical transmembrane segment spans residues 535 to 555; the sequence is ALVSNVTLFLGVALAAGGVYW.

It belongs to the FAD-binding monooxygenase family. The cofactor is FAD.

The protein localises to the membrane. Non-reducing polyketide synthase; part of the gene cluster that mediates the biosynthesis of the bicoumarin kotanin. The non-reducing polyketide synthase ktnS first catalyzes the formation of the pentaketidic 4,7-dihydroxy-5-methylcoumarin from acetyl coenzyme A and 4 malonyl coenzyme A molecules. Further O-methylation by ktnB leads to the formation of 7-demethylsiderin. Then, an oxidative phenol coupling catalyzed by the cytochrome P450 monooxygenase ktnC forms the 8,8'-dimer P-orlandin via dimerization the monomeric precursor, 7-demethylsiderin. P-orlandin is subsequently O-methylated in a stepwise fashion to demethylkotanin and kotanin. The function of ktnD within the pathway has not been determined yet. In Aspergillus niger (strain ATCC MYA-4892 / CBS 513.88 / FGSC A1513), this protein is FAD-binding monooxygenase ktnD.